The primary structure comprises 752 residues: MSTKAVRSIELARELGVKPLEIVKFIEKIRNIQFKKGTTNIKVEPDEIDKIIQHFKKEAKLEKIKEKEEKPVELKKTEEIKELEEKKPITPKIIEEEIKEEEELQLPGRFRREISFEKIEKIKPKPVPTKIPPKKFEPKKWLDIKEQKKVKDKNKKEEPAVTPSTAPRKKSIKIEEGTTVKEFAELIGQKVPDVIKKFMELGYMPTINQPVDIDAAQLVAESFGIKVEFSQTQELDIIEEVEDSPELLQPRPPIVTVMGHVDHGKTSLLDAIRKTKVTEQEAGGITQHIGAYKVTLQGKDITFLDTPGHEAFTALRARGAKVTDIVVLVVAADDGVMPQTIEAINHAKAANVPIVVAVNKIDKPEANPQRVRTQLSDYGVIPEEWGGQNIFVDISAKKRIGIENLLEMIALQAEIMELKANPNKPARGTIIESRLDKGRGPVATVIVQNGTLRIGDAFVAGVTYGKVRAIIDDTGKRINEAPPSTPVEVVGFEEVPQAGDSFTVVEDERIARQIANTRAQKKRLAEMQKAQRLTLQDLYEKIKEGEVKELNLVIKGDVQGSVEALKKAVEDITHPEIKVKVIHTGVGGITESDVNLAATANAIIIGFNVRPETKAQDLAEQLGVDIKLYSIIYEVIDDVKKALQGMLEPEIKERVIGRAEVRAVFKISKIGTVAGCYVLNGTISRASDGVRVIRDNIVVYEGKISSLKRFKEDVREVQAGYECGITIENFNDIKEGDILENYVLEKVPVKGL.

Over residues 148-159 (KKVKDKNKKEEP) the composition is skewed to basic and acidic residues. The interval 148–170 (KKVKDKNKKEEPAVTPSTAPRKK) is disordered. In terms of domain architecture, tr-type G spans 250–419 (PRPPIVTVMG…ALQAEIMELK (170 aa)). The tract at residues 259–266 (GHVDHGKT) is G1. 259–266 (GHVDHGKT) is a binding site for GTP. The segment at 284–288 (GITQH) is G2. The G3 stretch occupies residues 305–308 (DTPG). GTP-binding positions include 305 to 309 (DTPGH) and 359 to 362 (NKID). Positions 359 to 362 (NKID) are G4. Residues 395–397 (SAK) form a G5 region.

The protein belongs to the TRAFAC class translation factor GTPase superfamily. Classic translation factor GTPase family. IF-2 subfamily.

It is found in the cytoplasm. Its function is as follows. One of the essential components for the initiation of protein synthesis. Protects formylmethionyl-tRNA from spontaneous hydrolysis and promotes its binding to the 30S ribosomal subunits. Also involved in the hydrolysis of GTP during the formation of the 70S ribosomal complex. This chain is Translation initiation factor IF-2, found in Thermodesulfovibrio yellowstonii (strain ATCC 51303 / DSM 11347 / YP87).